A 113-amino-acid chain; its full sequence is N-alpha-acetyltransferase 38-A, NatC auxiliary subunit (113 aa).

Residues Met1–Ala29 form a disordered region. Residues Thr28–Ser106 enclose the Sm domain.

It belongs to the snRNP Sm proteins family. Component of the N-terminal acetyltransferase C (NatC) complex, which is composed of naa35, naa38 and naa30.

It is found in the cytoplasm. Auxillary component of the N-terminal acetyltransferase C (NatC) complex which catalyzes acetylation of N-terminal methionine residues. This chain is N-alpha-acetyltransferase 38-A, NatC auxiliary subunit (naa38-a), found in Xenopus laevis (African clawed frog).